Reading from the N-terminus, the 297-residue chain is MARIGIHSFVWSASSAQSELERTLANTREAGFDLIEFSYLDPADVDIGGLAKRIADLGLGVAISIGLPGDGDISSADKAVAARGVEILNETVALTRDLGGRKVAGILSAGHGLQLEAPTRDQWSRSTAALAKVAETAKAAGVTLNLEIVNRFESNLLNTAAQGLAFIEDTGSDNIFLHLDTFHMNIEEADVGLAIRHAAGKIGYVHIGESHRGFLGTGNIDFAAIFDALTAVGYADDLSFESFSSEIVDENLSKKTAIWRNLWADNMALAKHARAFIGLGLETARRKAELVSARHKP.

E147 serves as the catalytic Proton donor/acceptor. E147 provides a ligand contact to Mn(2+). Residues E153 and 180–183 (DTFH) contribute to the substrate site. Residues D180 and H206 each coordinate Mn(2+). R212 contributes to the substrate binding site. The Proton donor/acceptor role is filled by E241. Mn(2+) is bound at residue E241.

It belongs to the hyi family. In terms of assembly, homotetramer. The cofactor is Mn(2+).

The catalysed reaction is L-ribulose = L-xylulose. It carries out the reaction keto-D-tagatose = keto-D-sorbose. The enzyme catalyses D-allulose = keto-D-fructose. With respect to regulation, strongly inhibited by Co(2+) and Ni(2+), and slightly inhibited by EDTA. In terms of biological role, catalyzes the epimerization of various ketoses at the C(3) position. It is able to interconvert L-ribulose with high efficiency. The enzyme can also accept other ketopentoses such as D-psicose and D-tagatose with lower efficiency. This chain is L-ribulose 3-epimerase, found in Mesorhizobium japonicum (strain LMG 29417 / CECT 9101 / MAFF 303099) (Mesorhizobium loti (strain MAFF 303099)).